A 282-amino-acid polypeptide reads, in one-letter code: Probable endonuclease 4 (282 aa).

Zn(2+) contacts are provided by His-67, His-107, Glu-144, Asp-178, His-181, His-215, Asp-228, His-230, and Glu-260.

It belongs to the AP endonuclease 2 family. Requires Zn(2+) as cofactor.

It catalyses the reaction Endonucleolytic cleavage to 5'-phosphooligonucleotide end-products.. Endonuclease IV plays a role in DNA repair. It cleaves phosphodiester bonds at apurinic or apyrimidinic (AP) sites, generating a 3'-hydroxyl group and a 5'-terminal sugar phosphate. The protein is Probable endonuclease 4 of Methanoculleus marisnigri (strain ATCC 35101 / DSM 1498 / JR1).